A 109-amino-acid polypeptide reads, in one-letter code: MYTRNIGLDVKLPESECNDPHCPYHGKLSVRGQVLTGKVVSANMTKSAVVAREYQQYIPKYERKATKIKKYHVHVPDCIKIKPGDTVRFAECRKLAKTISFVIVEKVNQ.

It belongs to the universal ribosomal protein uS17 family. As to quaternary structure, part of the 30S ribosomal subunit.

Its function is as follows. One of the primary rRNA binding proteins, it binds specifically to the 5'-end of 16S ribosomal RNA. In Thermoplasma acidophilum (strain ATCC 25905 / DSM 1728 / JCM 9062 / NBRC 15155 / AMRC-C165), this protein is Small ribosomal subunit protein uS17.